Consider the following 179-residue polypeptide: Probable mitochondrial import inner membrane translocase subunit Tim17 1 (179 aa).

The next 3 helical transmembrane spans lie at 17–37 (CGGAFAMGALGGGAFQAIKGF), 61–81 (LVGGNFAVWGATFSAIDCSLV), and 113–133 (LSSALVGGALLALIEGVGIVV).

This sequence belongs to the Tim17/Tim22/Tim23 family. As to quaternary structure, component of the TIM23 complex at least composed of Tim23, Tim17 (Tim17a1, Tim17a2 or Tim17b1) and a Tim50. The complex interacts with the Tim44 component of the PAM complex.

It is found in the mitochondrion inner membrane. In terms of biological role, essential component of the TIM23 complex, a complex that mediates the translocation of transit peptide-containing proteins across the mitochondrial inner membrane. This is Probable mitochondrial import inner membrane translocase subunit Tim17 1 (Tim17b1) from Drosophila melanogaster (Fruit fly).